A 434-amino-acid chain; its full sequence is Glutamate-1-semialdehyde 2,1-aminomutase (434 aa).

Lys-266 bears the N6-(pyridoxal phosphate)lysine mark.

The protein belongs to the class-III pyridoxal-phosphate-dependent aminotransferase family. HemL subfamily. Homodimer. The cofactor is pyridoxal 5'-phosphate.

The protein localises to the cytoplasm. It catalyses the reaction (S)-4-amino-5-oxopentanoate = 5-aminolevulinate. Its pathway is porphyrin-containing compound metabolism; protoporphyrin-IX biosynthesis; 5-aminolevulinate from L-glutamyl-tRNA(Glu): step 2/2. In Psychrobacter sp. (strain PRwf-1), this protein is Glutamate-1-semialdehyde 2,1-aminomutase.